A 553-amino-acid polypeptide reads, in one-letter code: Arginine--tRNA ligase (553 aa).

The 'HIGH' region signature appears at 130–140 (ANPTGDLHIGH).

It belongs to the class-I aminoacyl-tRNA synthetase family. In terms of assembly, monomer.

The protein localises to the cytoplasm. The catalysed reaction is tRNA(Arg) + L-arginine + ATP = L-arginyl-tRNA(Arg) + AMP + diphosphate. The sequence is that of Arginine--tRNA ligase from Staphylococcus aureus (strain MRSA252).